The sequence spans 165 residues: 3-isopropylmalate dehydratase small subunit (165 aa).

The protein belongs to the LeuD family. LeuD type 2 subfamily. Heterodimer of LeuC and LeuD.

The catalysed reaction is (2R,3S)-3-isopropylmalate = (2S)-2-isopropylmalate. Its pathway is amino-acid biosynthesis; L-leucine biosynthesis; L-leucine from 3-methyl-2-oxobutanoate: step 2/4. Its function is as follows. Catalyzes the isomerization between 2-isopropylmalate and 3-isopropylmalate, via the formation of 2-isopropylmaleate. The chain is 3-isopropylmalate dehydratase small subunit from Halothermothrix orenii (strain H 168 / OCM 544 / DSM 9562).